Here is a 199-residue protein sequence, read N- to C-terminus: Recombination protein RecR (199 aa).

A C4-type zinc finger spans residues cysteine 57–cysteine 72. One can recognise a Toprim domain in the interval serine 81–proline 176.

Belongs to the RecR family.

In terms of biological role, may play a role in DNA repair. It seems to be involved in an RecBC-independent recombinational process of DNA repair. It may act with RecF and RecO. The polypeptide is Recombination protein RecR (Shewanella baltica (strain OS195)).